Here is a 150-residue protein sequence, read N- to C-terminus: Large ribosomal subunit protein bL9 (150 aa).

The protein belongs to the bacterial ribosomal protein bL9 family.

In terms of biological role, binds to the 23S rRNA. The sequence is that of Large ribosomal subunit protein bL9 from Hydrogenovibrio crunogenus (strain DSM 25203 / XCL-2) (Thiomicrospira crunogena).